A 602-amino-acid chain; its full sequence is Bifunctional ribose 1,5-bisphosphokinase-thymidine phosphorylase (602 aa).

The interval 1-187 (MKESGTFFLV…ALRNGANAGS (187 aa)) is ribose 1,5-bisphosphokinase. A thymidinephosphorylase region spans residues 188-602 (VPQPASRRHL…ASTAVRVDPD (415 aa)).

It in the N-terminal section; belongs to the ribose 1,5-bisphosphokinase family. The protein in the C-terminal section; belongs to the thymidine/pyrimidine-nucleoside phosphorylase family. Type 2 subfamily.

It carries out the reaction alpha-D-ribose 1,5-bisphosphate + ATP = 5-phospho-alpha-D-ribose 1-diphosphate + ADP. It catalyses the reaction thymidine + phosphate = 2-deoxy-alpha-D-ribose 1-phosphate + thymine. The protein operates within metabolic intermediate biosynthesis; 5-phospho-alpha-D-ribose 1-diphosphate biosynthesis; 5-phospho-alpha-D-ribose 1-diphosphate from D-ribose 5-phosphate (route II): step 3/3. Its function is as follows. Catalyzes the phosphorylation of ribose 1,5-bisphosphate to 5-phospho-D-ribosyl alpha-1-diphosphate (PRPP). This is Bifunctional ribose 1,5-bisphosphokinase-thymidine phosphorylase (phnN) from Cupriavidus pinatubonensis (strain JMP 134 / LMG 1197) (Cupriavidus necator (strain JMP 134)).